A 366-amino-acid chain; its full sequence is MDSVLRYVFLLLAMTSFYMMYISLFNNGFFNLLSHQLATRALPGESDIALLSEYTGLKAFDGILESIVIFFWPISQGHHVGLSLTGLSFSGGMVGIWMIVVVHICRIRSFTRGMVITLIVGIAQQAVGPGIVIPCYFALTSRARPPNKNLHLTGTYSTSNHGLVVSMIMSYIFPLVIMSLPAPAMISPHSKQQVIAAWQGWPVYFVIIMTTHHLFINRGHRKEASARRQVLSVYHFGFACSCLCHMAWLSAFVASKIQSLSQSSNFWYLCPYGVAFPLLNQPAQRLGALEAGLFTFLQWDYCVAAAATMVWSTDRYIQECHRAELEIDKFRLILRLLGWILIDGPSATAVRLIWESEGPSYLQNPN.

The next 8 membrane-spanning stretches (helical) occupy residues 9-29 (FLLL…NNGF), 84-104 (LTGL…VVHI), 113-133 (GMVI…GIVI), 162-182 (GLVV…SLPA), 195-215 (IAAW…HHLF), 233-253 (VYHF…SAFV), 291-311 (AGLF…TMVW), and 333-353 (ILRL…VRLI).

This sequence belongs to the membrane-bound ascI terpene cyclase family.

Its subcellular location is the membrane. In terms of biological role, aflatrem synthesis protein A; part of the ATM2 gene cluster that mediates the biosynthesis of aflatrem, a tremorgenic mycotoxin with acute neurotoxic effects. Synthesis of geranylgeranyl diphosphate (GGPP) by AtmG (a GGPP synthase) precedes condensation of GGPP with indole 3-glycerol phosphate, followed by epoxidation and cyclization by AtmM (a FAD-dependent monooxygenase) and AtmC (a prenyltransferase) to produce paspaline. AtmB is also essential for paspaline production, but its exact role has not been identified yet. AtmP, a cytochrome P450 monooxygenase, subsequently converts paspaline to 13-desoxypaxilline via PC-M6 by removal of the C-30 methyl group and oxidation at C-10. AtmQ, a cytochrome P450 monooxygenase, then catalyzes the oxidation of 13-desoxypaxilline, first at C-7 to produce paspalicine and then at C-13 to form paspalinine. Finally, AtmD prenylates paspalinine to form aflatrem. The role of atmA in the aflatrem biosynthesis is still unknown. This chain is Terpene cyclase atmA, found in Aspergillus flavus.